The primary structure comprises 220 residues: UPF0319 protein YccT (220 aa).

A signal peptide spans Met1–Ala20.

The protein belongs to the UPF0319 family.

The polypeptide is UPF0319 protein YccT (Salmonella agona (strain SL483)).